Here is a 264-residue protein sequence, read N- to C-terminus: Undecaprenyl-diphosphatase (264 aa).

The next 6 helical transmembrane spans lie at 41–61 (NLAFTIVVHVATVCSTLVILW), 82–102 (YVINIVISMIPIGIVGVFFKD), 106–126 (AIFGSGLMIVGCMLLLTAALL), 140–160 (ISMKDAFIIGLAQACAVLPGL), 213–233 (IPALSLIVGFLAAFVAGCLAC), and 244–264 (KLIYFAIYCAIAGLAVIITQL).

The protein belongs to the UppP family.

It is found in the cell inner membrane. The enzyme catalyses di-trans,octa-cis-undecaprenyl diphosphate + H2O = di-trans,octa-cis-undecaprenyl phosphate + phosphate + H(+). In terms of biological role, catalyzes the dephosphorylation of undecaprenyl diphosphate (UPP). Confers resistance to bacitracin. In Bacteroides thetaiotaomicron (strain ATCC 29148 / DSM 2079 / JCM 5827 / CCUG 10774 / NCTC 10582 / VPI-5482 / E50), this protein is Undecaprenyl-diphosphatase.